Consider the following 446-residue polypeptide: MVPQTHGLLLLYFLLQLQGPLGAVVFITQEEAHGVLHRQRRANSLLEELWSSSLERECNEERCSFEEAREIFKSPERTKQFWTIYSDGDQCASNPCQNGGTCQDHLKSYVCFCPLDFEGRNCEKNKNEQLICANENGDCDQYCRDHVGTKRTCSCHEDYVLQPDEVSCKPKVEYPCGRIPVVEKRNFSRPQGRIVGGYVCPKGECPWQAVLKFNEALLCGAVLLDTRWIVTAAHCFDKFGKLVNITVVLGEHDFSEKEGTEQVRLVEQVIMPNKYTRGRTDHDIALVRLHRPVTFTDYVVPLCLPERAFSENTLASIRFSRVSGWGQLLDRGATALELMVIEVPRLMTQDCLEHAKHSANTPRITENMFCAGYMDGTKDACKGDSGGPHATHYHGTWYLTGVVSWGEGCAAIGHIGVYTRVSQYIDWLVKYMDSKLRVGISRVSLL.

The first 24 residues, 1–24 (MVPQTHGLLLLYFLLQLQGPLGAV), serve as a signal peptide directing secretion. Positions 25-41 (VFITQEEAHGVLHRQRR) are excised as a propeptide. The region spanning 42–86 (ANSLLEELWSSSLERECNEERCSFEEAREIFKSPERTKQFWTIYS) is the Gla domain. A 4-carboxyglutamate mark is found at Glu47, Glu48, Glu55, Glu57, Glu60, Glu61, Glu66, Glu67, Glu70, and Glu76. The cysteines at positions 58 and 63 are disulfide-linked. An EGF-like 1; calcium-binding domain is found at 87 to 123 (DGDQCASNPCQNGGTCQDHLKSYVCFCPLDFEGRNCE). Disulfide bonds link Cys91–Cys102, Cys96–Cys111, Cys113–Cys122, Cys132–Cys143, Cys139–Cys153, Cys155–Cys168, Cys176–Cys303, Cys200–Cys205, Cys219–Cys235, and Cys351–Cys370. Residue Ser93 is glycosylated (O-linked (Glc...) serine; alternate). Ser93 carries an O-linked (Xyl...) serine; alternate glycan. A glycan (O-linked (Fuc) threonine) is linked at Thr101. Asp104 carries the (3R)-3-hydroxyaspartate modification. Residues 128–169 (EQLICANENGDCDQYCRDHVGTKRTCSCHEDYVLQPDEVSCK) form the EGF-like 2 domain. Asn186 carries an N-linked (GlcNAc...) asparagine glycan. One can recognise a Peptidase S1 domain in the interval 194–433 (IVGGYVCPKG…YIDWLVKYMD (240 aa)). His234 serves as the catalytic Charge relay system. Asn244 is a glycosylation site (N-linked (GlcNAc...) asparagine). Asp283 acts as the Charge relay system in catalysis. Asp379 contacts substrate. An intrachain disulfide couples Cys381 to Cys409. Catalysis depends on Ser385, which acts as the Charge relay system.

Belongs to the peptidase S1 family. As to quaternary structure, heterodimer of a light chain and a heavy chain linked by a disulfide bond. The vitamin K-dependent, enzymatic carboxylation of some glutamate residues allows the modified protein to bind calcium. In terms of processing, the iron and 2-oxoglutarate dependent 3-hydroxylation of aspartate and asparagine is (R) stereospecific within EGF domains. Post-translationally, can be either O-glucosylated or O-xylosylated at Ser-93 by POGLUT1. In terms of tissue distribution, plasma.

The protein resides in the secreted. The enzyme catalyses Selective cleavage of Arg-|-Ile bond in factor X to form factor Xa.. Functionally, initiates the extrinsic pathway of blood coagulation. Serine protease that circulates in the blood in a zymogen form. Factor VII is converted to factor VIIa by factor Xa, factor XIIa, factor IXa, or thrombin by minor proteolysis. In the presence of tissue factor and calcium ions, factor VIIa then converts factor X to factor Xa by limited proteolysis. Factor VIIa also converts factor IX to factor IXa in the presence of tissue factor and calcium. The chain is Coagulation factor VII (F7) from Rattus norvegicus (Rat).